We begin with the raw amino-acid sequence, 1028 residues long: Endosome/lysosome-associated apoptosis and autophagy regulator family member 2 (1028 aa).

The signal sequence occupies residues 1–47 (MLLLTLRRAKGRDRGRPAGGPRRALSLPWSPAWICCWALAGCQAVWA). At 48–928 (GDSSSSGRPL…TCETVDFWLK (881 aa)) the chain is on the extracellular side. The N-linked (GlcNAc...) asparagine glycan is linked to Asn-168. 3 cysteine pairs are disulfide-bonded: Cys-292-Cys-309, Cys-322-Cys-345, and Cys-325-Cys-357. N-linked (GlcNAc...) asparagine glycans are attached at residues Asn-404 and Asn-690. In terms of domain architecture, MRH spans 671 to 876 (SDCFFYHEKE…LWESAEACPL (206 aa)). Disulfide bonds link Cys-673–Cys-719, Cys-729–Cys-757, Cys-826–Cys-862, and Cys-838–Cys-874. The chain crosses the membrane as a helical span at residues 929–949 (VGAGVGAFTAVLLVALTCYFW). At 950-1028 (KKNQKLEYKY…QLKSSRCPNI (79 aa)) the chain is on the cytoplasmic side. A Phosphoserine modification is found at Ser-1017.

The protein belongs to the ELAPOR family.

It localises to the cell membrane. Functionally, functions as a regulator of the BMP signaling pathway and may be involved in epidermal differentiation. This is Endosome/lysosome-associated apoptosis and autophagy regulator family member 2 from Mus musculus (Mouse).